The primary structure comprises 375 residues: Queuine tRNA-ribosyltransferase (375 aa).

Residue Asp89 is the Proton acceptor of the active site. Residues 89–93, Asp143, Gln187, and Gly214 contribute to the substrate site; that span reads DSGGF. The tract at residues 245 to 251 is RNA binding; the sequence is GVGKPED. Asp264 serves as the catalytic Nucleophile. The segment at 269–273 is RNA binding; important for wobble base 34 recognition; it reads TRNAR. Residues Cys302, Cys304, Cys307, and His333 each contribute to the Zn(2+) site.

The protein belongs to the queuine tRNA-ribosyltransferase family. As to quaternary structure, homodimer. Within each dimer, one monomer is responsible for RNA recognition and catalysis, while the other monomer binds to the replacement base PreQ1. Requires Zn(2+) as cofactor.

The enzyme catalyses 7-aminomethyl-7-carbaguanine + guanosine(34) in tRNA = 7-aminomethyl-7-carbaguanosine(34) in tRNA + guanine. It participates in tRNA modification; tRNA-queuosine biosynthesis. Its function is as follows. Catalyzes the base-exchange of a guanine (G) residue with the queuine precursor 7-aminomethyl-7-deazaguanine (PreQ1) at position 34 (anticodon wobble position) in tRNAs with GU(N) anticodons (tRNA-Asp, -Asn, -His and -Tyr). Catalysis occurs through a double-displacement mechanism. The nucleophile active site attacks the C1' of nucleotide 34 to detach the guanine base from the RNA, forming a covalent enzyme-RNA intermediate. The proton acceptor active site deprotonates the incoming PreQ1, allowing a nucleophilic attack on the C1' of the ribose to form the product. After dissociation, two additional enzymatic reactions on the tRNA convert PreQ1 to queuine (Q), resulting in the hypermodified nucleoside queuosine (7-(((4,5-cis-dihydroxy-2-cyclopenten-1-yl)amino)methyl)-7-deazaguanosine). The protein is Queuine tRNA-ribosyltransferase of Enterobacter sp. (strain 638).